Consider the following 310-residue polypeptide: MNVIDLFSGCGGFSKGFLDENFRILGAIENFKPVVKTYLYNIKAPVWMDDIKRIPPKAFDEFIKNEKVDVIIGSPPCEPFTKANKLIKDNPLDRLYKDKVGRLVLYYIDYVNYFTQRNDDLIFVMENVPQIKEIKDELKKLFGDIGHKVYFNILRAEDYGNPSKRARMFISNIKLKPKKVDKLVVVEEALKDIPKDAKNHEIKKLSKEKVEMISKLKWGEALYRYRGKKKLMFNWYKLHPKKLAPTVKGRSRFIHPYEDRLLTVREQARLMSYPDDFVFFGGRDVQYNQIGESVPPILGRAIAKEIKKQL.

The SAM-dependent MTase C5-type domain maps to 1–310; the sequence is MNVIDLFSGC…AIAKEIKKQL (310 aa). The active site involves Cys77.

It belongs to the class I-like SAM-binding methyltransferase superfamily. C5-methyltransferase family.

The catalysed reaction is a 2'-deoxycytidine in DNA + S-adenosyl-L-methionine = a 5-methyl-2'-deoxycytidine in DNA + S-adenosyl-L-homocysteine + H(+). Its function is as follows. A putative methylase that may protect DNA from cleavage by an unknown endonuclease. This Methanocaldococcus jannaschii (strain ATCC 43067 / DSM 2661 / JAL-1 / JCM 10045 / NBRC 100440) (Methanococcus jannaschii) protein is Putative type II methyltransferase M.MJ0563P.